The sequence spans 2051 residues: Fatty acid synthase subunit beta (2051 aa).

N-acetylmethionine is present on M1. The tract at residues 1-468 is acetyltransferase; sequence MDAYSTRPLT…VYDTFDGSDL (468 aa). S274 functions as the For acetyltransferase activity in the catalytic mechanism. Residues 480–868 are enoyl reductase; the sequence is VDCIIRLPVK…TRGVMLWKEF (389 aa). A Phosphothreonine modification is found at T733. S1121 is subject to Phosphoserine. Residues 1144-1626 form a dehydratase region; the sequence is GSEINWRHAS…LPNTALKTSI (483 aa). A Glycyl lysine isopeptide (Lys-Gly) (interchain with G-Cter in ubiquitin) cross-link involves residue K1364. Positions 1523–1648 constitute a MaoC-like domain; that stretch reads NGSTLEQKVN…KFETRNEDDV (126 aa). Residues 1627 to 1845 are malonyl/palmitoyl transferase; it reads QHVGMINGRK…MTMQVAVPRD (219 aa). The For malonyltransferase activity role is filled by S1808.

This sequence belongs to the fungal fatty acid synthetase subunit beta family. In terms of assembly, [Alpha(6)beta(6)] hexamers of two multifunctional subunits (alpha and beta).

The catalysed reaction is acetyl-CoA + n malonyl-CoA + 2n NADPH + 4n H(+) = a long-chain-acyl-CoA + n CoA + n CO2 + 2n NADP(+).. It carries out the reaction holo-[ACP] + acetyl-CoA = acetyl-[ACP] + CoA. It catalyses the reaction holo-[ACP] + malonyl-CoA = malonyl-[ACP] + CoA. The enzyme catalyses a (3R)-hydroxyacyl-[ACP] = a (2E)-enoyl-[ACP] + H2O. The catalysed reaction is a 2,3-saturated acyl-[ACP] + NAD(+) = a (2E)-enoyl-[ACP] + NADH + H(+). It carries out the reaction (9Z)-octadecenoyl-[ACP] + H2O = (9Z)-octadecenoate + holo-[ACP] + H(+). Its function is as follows. Fatty acid synthetase catalyzes the formation of long-chain fatty acids from acetyl-CoA, malonyl-CoA and NADPH. The beta subunit contains domains for: [acyl-carrier-protein] acetyltransferase and malonyltransferase, S-acyl fatty acid synthase thioesterase, enoyl-[acyl-carrier-protein] reductase, and 3-hydroxypalmitoyl-[acyl-carrier-protein] dehydratase. The sequence is that of Fatty acid synthase subunit beta (FAS1) from Saccharomyces cerevisiae (strain ATCC 204508 / S288c) (Baker's yeast).